The primary structure comprises 249 residues: Chitooligosaccharide deacetylase (249 aa).

His-61 and His-125 together coordinate Mg(2+).

The protein belongs to the YdjC deacetylase family. ChbG subfamily. In terms of assembly, homodimer. Requires Mg(2+) as cofactor.

It is found in the cytoplasm. The catalysed reaction is N,N'-diacetylchitobiose + H2O = N-acetyl-beta-D-glucosaminyl-(1-&gt;4)-D-glucosamine + acetate. The enzyme catalyses diacetylchitobiose-6'-phosphate + H2O = N'-monoacetylchitobiose-6'-phosphate + acetate. Its pathway is glycan degradation; chitin degradation. In terms of biological role, involved in the degradation of chitin. ChbG is essential for growth on the acetylated chitooligosaccharides chitobiose and chitotriose but is dispensable for growth on cellobiose and chitosan dimer, the deacetylated form of chitobiose. Deacetylation of chitobiose-6-P and chitotriose-6-P is necessary for both the activation of the chb promoter by the regulatory protein ChbR and the hydrolysis of phosphorylated beta-glucosides by the phospho-beta-glucosidase ChbF. Catalyzes the removal of only one acetyl group from chitobiose-6-P to yield monoacetylchitobiose-6-P, the inducer of ChbR and the substrate of ChbF. In Escherichia coli O17:K52:H18 (strain UMN026 / ExPEC), this protein is Chitooligosaccharide deacetylase.